The following is a 325-amino-acid chain: Elongation factor P--(R)-beta-lysine ligase (325 aa).

76–78 contributes to the substrate binding site; it reads SPE. ATP contacts are provided by residues 100 to 102 and Asn-109; that span reads RNE. Residue Tyr-118 participates in substrate binding. Position 244–245 (244–245) interacts with ATP; it reads EL. Glu-251 serves as a coordination point for substrate. Gly-300 is an ATP binding site.

Belongs to the class-II aminoacyl-tRNA synthetase family. EpmA subfamily. Homodimer.

It catalyses the reaction D-beta-lysine + L-lysyl-[protein] + ATP = N(6)-((3R)-3,6-diaminohexanoyl)-L-lysyl-[protein] + AMP + diphosphate + H(+). Its function is as follows. With EpmB is involved in the beta-lysylation step of the post-translational modification of translation elongation factor P (EF-P) on 'Lys-34'. Catalyzes the ATP-dependent activation of (R)-beta-lysine produced by EpmB, forming a lysyl-adenylate, from which the beta-lysyl moiety is then transferred to the epsilon-amino group of EF-P 'Lys-34'. This Salmonella dublin (strain CT_02021853) protein is Elongation factor P--(R)-beta-lysine ligase.